We begin with the raw amino-acid sequence, 743 residues long: MRRSHLLATVACATLACAPLAANAQFAPAGSGGSPTSSVPGPGNGSGNSFEPTENTPAAKSRFSGPSPYAPQAPGVNAANLPDIGSMDPNDVPQMAPQQSASPASGDWAAYGHDDSQMRYSPLSEITPQNADQLKVAFVYHTGSYPRPGQTNKWAAETTPIKVGDGLYMCSAQNDIMKIDPATGKEIWRHNINEKYEAIPYTAACKGVTYFTSSQVPEGQPCHNRILEGTLDMRLIAVDAATGNLCEGFGNGGQVNLMQGLGESVPGFVSMTTPPPVVNGVVVVNHEVLDGQRRWAPSGVIRGYDAESGKFLWAWDVNRPNDHSQPTGNNHYSRGTPNSWAAMTGDNALGLVYVPTGNSASDYYSALRSPEENKVSSAVVALDVKTGSPRWVFQTVHKDVWDYDIGSQATLMDMPGQDGQPVPALIMPTKRGQTFVLDRRDGKPILPVEERPAPSPGVIPGDPRSPTQPWSTGMPALRVPDLKETDMWGMSPIDQLFCRIKFRRANYTGEFTPPSVDKPWIEYPGYNGGSDWGSVSYDPQSGILIANWNITPMYDQLVTRKKADELGLMPIDDPNYKPGGGGAEGNGAMDGTPYGIVVTPFWDQYTGMMCNRPPYGMITAIDMKHGQKVLWQHPLGTARANGPWGLPTGLPWEIGTPNNGGSVVTAGGVVFIAAATDNQIRAIDEHTGKVVWSAVLPGGGQANPMTYEANGHQYVAIMAGGHHFMMTPVSDQLVVYALPDHKG.

An N-terminal signal peptide occupies residues 1-24; that stretch reads MRRSHLLATVACATLACAPLAANA. The span at 27-41 shows a compositional bias: low complexity; sequence APAGSGGSPTSSVPG. Disordered regions lie at residues 27–115 and 445–474; these read APAG…GHDD and ILPV…STGM.

Belongs to the bacterial PQQ dehydrogenase family. It depends on pyrroloquinoline quinone as a cofactor.

Its subcellular location is the secreted. The enzyme catalyses glycerol + A = dihydroxyacetone + AH2. Catalyzes the oxidation of glycerol to glycerone. Also acts, more slowly, on a number of other polyols including D-sorbitol, D-arabinitol, D-mannitol, meso-erythritol, adonitol and propylene glycol. This chain is Glycerol dehydrogenase large subunit (sldA), found in Gluconobacter oxydans (strain 621H) (Gluconobacter suboxydans).